Reading from the N-terminus, the 100-residue chain is Putative pterin-4-alpha-carbinolamine dehydratase (100 aa).

This sequence belongs to the pterin-4-alpha-carbinolamine dehydratase family.

It carries out the reaction (4aS,6R)-4a-hydroxy-L-erythro-5,6,7,8-tetrahydrobiopterin = (6R)-L-erythro-6,7-dihydrobiopterin + H2O. The polypeptide is Putative pterin-4-alpha-carbinolamine dehydratase (Afipia carboxidovorans (strain ATCC 49405 / DSM 1227 / KCTC 32145 / OM5) (Oligotropha carboxidovorans)).